Here is a 96-residue protein sequence, read N- to C-terminus: Aspartyl/glutamyl-tRNA(Asn/Gln) amidotransferase subunit C (96 aa).

It belongs to the GatC family. Heterotrimer of A, B and C subunits.

The catalysed reaction is L-glutamyl-tRNA(Gln) + L-glutamine + ATP + H2O = L-glutaminyl-tRNA(Gln) + L-glutamate + ADP + phosphate + H(+). It catalyses the reaction L-aspartyl-tRNA(Asn) + L-glutamine + ATP + H2O = L-asparaginyl-tRNA(Asn) + L-glutamate + ADP + phosphate + 2 H(+). Its function is as follows. Allows the formation of correctly charged Asn-tRNA(Asn) or Gln-tRNA(Gln) through the transamidation of misacylated Asp-tRNA(Asn) or Glu-tRNA(Gln) in organisms which lack either or both of asparaginyl-tRNA or glutaminyl-tRNA synthetases. The reaction takes place in the presence of glutamine and ATP through an activated phospho-Asp-tRNA(Asn) or phospho-Glu-tRNA(Gln). This chain is Aspartyl/glutamyl-tRNA(Asn/Gln) amidotransferase subunit C, found in Leptospira interrogans serogroup Icterohaemorrhagiae serovar copenhageni (strain Fiocruz L1-130).